The primary structure comprises 961 residues: Ras-interacting protein 1 (961 aa).

Residues Met1–Gly10 show a composition bias toward basic and acidic residues. 3 disordered regions span residues Met1–Val21, Leu35–Glu70, and Arg96–Ala116. Low complexity predominate over residues Ser41 to Ser57. The segment covering Pro59–His68 has biased composition (pro residues). Residue Arg96 is modified to Omega-N-methylarginine. A compositionally biased stretch (gly residues) spans Ser98 to Gly110. The Ras-associating domain occupies Pro141 to Glu253. A disordered region spans residues Ala261 to Met352. A phosphoserine mark is found at Ser274 and Ser286. A compositionally biased stretch (low complexity) spans Ala284–Gly295. Residues Pro296–Gly307 show a composition bias toward gly residues. Positions Asn314 to Gln327 are enriched in low complexity. 4 positions are modified to phosphoserine: Ser320, Ser322, Ser325, and Ser413. One can recognise a Dilute domain in the interval Gly594–Thr895.

Interacts with Ras family members that have been activated by GTP binding. Interacts with HRAS, RAP1A, RAP2, RRAS, RAF1 and RRAS2. Interacts with MYH9 and ARHGAP29. Detected in kidney, heart, skeletal muscle, small intestine and lung.

The protein localises to the cytoplasm. It is found in the perinuclear region. Its subcellular location is the golgi apparatus. The protein resides in the golgi stack. Functionally, required for the proper formation of vascular structures that develop via both vasculogenesis and angiogenesis. Acts as a critical and vascular-specific regulator of GTPase signaling, cell architecture, and adhesion, which is essential for endothelial cell morphogenesis and blood vessel tubulogenesis. Regulates the activity of Rho GTPases in part by recruiting ARHGAP29 and suppressing RhoA signaling and dampening ROCK and MYH9 activities in endothelial cells. May act as effector for Golgi-bound HRAS and other Ras-like proteins. May promote HRAS-mediated transformation. Negative regulator of amino acid starvation-induced autophagy. The protein is Ras-interacting protein 1 (Rasip1) of Mus musculus (Mouse).